A 106-amino-acid polypeptide reads, in one-letter code: Urease subunit beta (106 aa).

This sequence belongs to the urease beta subunit family. In terms of assembly, heterotrimer of UreA (gamma), UreB (beta) and UreC (alpha) subunits. Three heterotrimers associate to form the active enzyme.

It is found in the cytoplasm. The enzyme catalyses urea + 2 H2O + H(+) = hydrogencarbonate + 2 NH4(+). Its pathway is nitrogen metabolism; urea degradation; CO(2) and NH(3) from urea (urease route): step 1/1. The sequence is that of Urease subunit beta from Alkalilimnicola ehrlichii (strain ATCC BAA-1101 / DSM 17681 / MLHE-1).